Reading from the N-terminus, the 431-residue chain is Asparagine--tRNA ligase 1 (431 aa).

Belongs to the class-II aminoacyl-tRNA synthetase family. Homodimer.

The protein resides in the cytoplasm. It carries out the reaction tRNA(Asn) + L-asparagine + ATP = L-asparaginyl-tRNA(Asn) + AMP + diphosphate + H(+). This chain is Asparagine--tRNA ligase 1 (asnS1), found in Lactiplantibacillus plantarum (strain ATCC BAA-793 / NCIMB 8826 / WCFS1) (Lactobacillus plantarum).